The primary structure comprises 1414 residues: Protein KATNIP homolog (1414 aa).

Disordered stretches follow at residues 1–32 (MHGK…DEKH), 80–116 (QQST…PGKI), 139–158 (GPNT…NEDQ), 712–731 (VSAT…NDLT), 756–783 (SSSS…TFTN), 823–861 (KMDN…SEKY), and 924–943 (QQQK…SLMP). Basic and acidic residues-rich tracts occupy residues 10-32 (RKND…DEKH) and 86-101 (LARE…DDGC). Acidic residues predominate over residues 147-158 (DFESDDDMNEDQ). Composition is skewed to polar residues over residues 832–843 (NFSNQSSYNSDR) and 924–940 (QQQK…NGSS).

It is found in the cytoplasm. It localises to the cytoskeleton. The protein resides in the cilium axoneme. Its subcellular location is the cilium basal body. Functionally, may control cilium integrity. The chain is Protein KATNIP homolog from Xenopus laevis (African clawed frog).